Reading from the N-terminus, the 66-residue chain is Large ribosomal subunit protein bL35 (66 aa).

Composition is skewed to basic residues over residues 1 to 16 (MPKFKTHRASAKRFKR) and 23 to 45 (KRSHAYTSHRFHGKTKKQRRQLR). Residues 1 to 66 (MPKFKTHRAS…RIRQMLSGLK (66 aa)) are disordered.

It belongs to the bacterial ribosomal protein bL35 family.

This is Large ribosomal subunit protein bL35 from Latilactobacillus sakei subsp. sakei (strain 23K) (Lactobacillus sakei subsp. sakei).